A 211-amino-acid chain; its full sequence is Protein-L-isoaspartate O-methyltransferase (211 aa).

Residue serine 62 is part of the active site.

Belongs to the methyltransferase superfamily. L-isoaspartyl/D-aspartyl protein methyltransferase family.

The protein localises to the cytoplasm. The catalysed reaction is [protein]-L-isoaspartate + S-adenosyl-L-methionine = [protein]-L-isoaspartate alpha-methyl ester + S-adenosyl-L-homocysteine. Functionally, catalyzes the methyl esterification of L-isoaspartyl residues in peptides and proteins that result from spontaneous decomposition of normal L-aspartyl and L-asparaginyl residues. It plays a role in the repair and/or degradation of damaged proteins. This Shewanella loihica (strain ATCC BAA-1088 / PV-4) protein is Protein-L-isoaspartate O-methyltransferase.